A 337-amino-acid chain; its full sequence is Holliday junction branch migration complex subunit RuvB (337 aa).

The interval A4 to Y184 is large ATPase domain (RuvB-L). ATP-binding positions include I23, R24, G65, K68, T69, T70, E131–Y133, R174, Y184, and R221. T69 contributes to the Mg(2+) binding site. The segment at K185–D255 is small ATPAse domain (RuvB-S). The tract at residues N258–G337 is head domain (RuvB-H). DNA contacts are provided by R313 and R318.

This sequence belongs to the RuvB family. Homohexamer. Forms an RuvA(8)-RuvB(12)-Holliday junction (HJ) complex. HJ DNA is sandwiched between 2 RuvA tetramers; dsDNA enters through RuvA and exits via RuvB. An RuvB hexamer assembles on each DNA strand where it exits the tetramer. Each RuvB hexamer is contacted by two RuvA subunits (via domain III) on 2 adjacent RuvB subunits; this complex drives branch migration. In the full resolvosome a probable DNA-RuvA(4)-RuvB(12)-RuvC(2) complex forms which resolves the HJ.

It localises to the cytoplasm. The catalysed reaction is ATP + H2O = ADP + phosphate + H(+). Its function is as follows. The RuvA-RuvB-RuvC complex processes Holliday junction (HJ) DNA during genetic recombination and DNA repair, while the RuvA-RuvB complex plays an important role in the rescue of blocked DNA replication forks via replication fork reversal (RFR). RuvA specifically binds to HJ cruciform DNA, conferring on it an open structure. The RuvB hexamer acts as an ATP-dependent pump, pulling dsDNA into and through the RuvAB complex. RuvB forms 2 homohexamers on either side of HJ DNA bound by 1 or 2 RuvA tetramers; 4 subunits per hexamer contact DNA at a time. Coordinated motions by a converter formed by DNA-disengaged RuvB subunits stimulates ATP hydrolysis and nucleotide exchange. Immobilization of the converter enables RuvB to convert the ATP-contained energy into a lever motion, pulling 2 nucleotides of DNA out of the RuvA tetramer per ATP hydrolyzed, thus driving DNA branch migration. The RuvB motors rotate together with the DNA substrate, which together with the progressing nucleotide cycle form the mechanistic basis for DNA recombination by continuous HJ branch migration. Branch migration allows RuvC to scan DNA until it finds its consensus sequence, where it cleaves and resolves cruciform DNA. The protein is Holliday junction branch migration complex subunit RuvB of Tolumonas auensis (strain DSM 9187 / NBRC 110442 / TA 4).